The primary structure comprises 517 residues: Pseudaminic acid cytidylyltransferase and UDP-2,4-diacetamido-2,4,6-trideoxy-beta-L-altropyranose hydrolase (517 aa).

Residues 1–208 (MRAIAIVLAR…ELSPLEVQDI (208 aa)) form a pseudaminic acid cytidylyltransferase region. Positions 209–517 (AHFRRFRISQ…EGALREFLEI (309 aa)) are UDP-2,4-diacetamido-2,4,6-trideoxy-beta-L-altropyranose hydrolase. The Proton acceptor; for UDP-2,4-diacetamido-2,4,6-trideoxy-beta-L-altropyranose hydrolase activity role is filled by histidine 244.

This sequence in the N-terminal section; belongs to the CMP-NeuNAc synthase family. The protein in the C-terminal section; belongs to the PseG family. As to quaternary structure, monomer. Requires Mg(2+) as cofactor.

It catalyses the reaction UDP-2,4-diacetamido-2,4,6-trideoxy-beta-L-altrose + H2O = 2,4-diacetamido-2,4,6-trideoxy-beta-L-altrose + UDP + H(+). The catalysed reaction is pseudaminate + CTP = CMP-pseudaminate + diphosphate. Its function is as follows. Catalyzes the fourth and sixth steps in the biosynthesis of pseudaminic acid, a sialic-acid-like sugar that is used to modify flagellin. The C-terminus mediates the fourth step of the pathway and catalyzes the removal of UDP from C-1 of UDP-2,4-diacetamido-2,4,6-trideoxy-beta-L-altropyranose forming 2,4-diacetamido-2,4,6-trideoxy-beta-L-altropyranose. The N-terminal part mediates the last step of the pathway by mediating activation of pseudaminic acid with CMP by forming CMP-pseudaminic acid. This Helicobacter pylori (strain ATCC 700392 / 26695) (Campylobacter pylori) protein is Pseudaminic acid cytidylyltransferase and UDP-2,4-diacetamido-2,4,6-trideoxy-beta-L-altropyranose hydrolase.